Here is a 326-residue protein sequence, read N- to C-terminus: Lipid droplet-associated hydrolase (326 aa).

Ser140 serves as the catalytic Nucleophile. Catalysis depends on charge relay system residues Asp272 and His301.

This sequence belongs to the AB hydrolase superfamily. LDAH family. Expressed in liver, adrenal gland, prostate, spleen, kidney, brown and white adipose tissue, testis and to a lesser extent in brain (at protein level). Expressed in peritoneal macrophages and bone marrow-derived macrophages (at protein level). Highly expressed in macrophage and foam cell-rich areas in atherosclerotic lesions (at protein level). mRNA, but no protein, expressed in heart and muscle.

It is found in the lipid droplet. It localises to the endoplasmic reticulum. It carries out the reaction a cholesterol ester + H2O = cholesterol + a fatty acid + H(+). Its function is as follows. Probable serine lipid hydrolase associated with lipid droplets. Has low cholesterol esterase activity. Appears to lack triglyceride lipase activity. Involved in cholesterol and triglyceride homeostasis; stimulates cellular triglyceride accumulation and cellular cholesterol release. Acts antagonistically with PNPLA2/ATGL in regulation of cellular lipid stores. May regulate triglyceride accumulation indirectly through stimulation of PNPLA2/ATGL ubiquitination and proteasomal degradation. Promotes microtubule-dependent lipid droplet fusion. Highly expressed in macrophage-rich areas in atherosclerotic lesions, suggesting that it could promote cholesterol ester turnover in macrophages. In terms of biological role, stimulates cellular triglyceride accumulation and lipid droplet fusion. Functionally, associates with lipid droplets but does not stimulate cellular triglyceride accumulation, lipid droplet fusion or ATGL proteasomal degradation. This Mus musculus (Mouse) protein is Lipid droplet-associated hydrolase.